A 72-amino-acid polypeptide reads, in one-letter code: UPF0154 protein lhv_1362 (72 aa).

The helical transmembrane segment at 3–23 (LGLAIFLIIIALLVGAVAGFY) threads the bilayer.

This sequence belongs to the UPF0154 family.

Its subcellular location is the cell membrane. This is UPF0154 protein lhv_1362 from Lactobacillus helveticus (strain DPC 4571).